The chain runs to 190 residues: Holliday junction branch migration complex subunit RuvA (190 aa).

The interval 1 to 65 (MIGNLSGIVD…ENVAQLYGFI (65 aa)) is domain I. A domain II region spans residues 66-143 (SKEEQQCLRL…KLEINNNNFH (78 aa)). The tract at residues 144–147 (PINE) is flexible linker. The tract at residues 147 to 190 (EDALSALINLGYEKMKAYDTIKKYRPNLDTKDIIRMALKELSIL) is domain III.

The protein belongs to the RuvA family. Homotetramer. Forms an RuvA(8)-RuvB(12)-Holliday junction (HJ) complex. HJ DNA is sandwiched between 2 RuvA tetramers; dsDNA enters through RuvA and exits via RuvB. An RuvB hexamer assembles on each DNA strand where it exits the tetramer. Each RuvB hexamer is contacted by two RuvA subunits (via domain III) on 2 adjacent RuvB subunits; this complex drives branch migration. In the full resolvosome a probable DNA-RuvA(4)-RuvB(12)-RuvC(2) complex forms which resolves the HJ.

The protein resides in the cytoplasm. Its function is as follows. The RuvA-RuvB-RuvC complex processes Holliday junction (HJ) DNA during genetic recombination and DNA repair, while the RuvA-RuvB complex plays an important role in the rescue of blocked DNA replication forks via replication fork reversal (RFR). RuvA specifically binds to HJ cruciform DNA, conferring on it an open structure. The RuvB hexamer acts as an ATP-dependent pump, pulling dsDNA into and through the RuvAB complex. HJ branch migration allows RuvC to scan DNA until it finds its consensus sequence, where it cleaves and resolves the cruciform DNA. In Wolbachia pipientis wMel, this protein is Holliday junction branch migration complex subunit RuvA.